Consider the following 93-residue polypeptide: Small ribosomal subunit protein uS19c (93 aa).

This sequence belongs to the universal ribosomal protein uS19 family.

The protein resides in the plastid. It is found in the chloroplast. Its function is as follows. Protein S19 forms a complex with S13 that binds strongly to the 16S ribosomal RNA. In Ipomoea purpurea (Common morning glory), this protein is Small ribosomal subunit protein uS19c.